The primary structure comprises 447 residues: Protein O-GlcNAcase (447 aa).

In terms of domain architecture, GH84 spans 1–277 (MLTGVIEGFY…TTGAYLADPD (277 aa)). 3 residues coordinate a protein: Gly-8, Lys-39, and Asp-115. The active-site Proton donor is Asp-116. A protein-binding positions include Tyr-160, 219-221 (WDN), Asp-226, and Asn-254.

It belongs to the glycosyl hydrolase 84 family.

The enzyme catalyses 3-O-(N-acetyl-beta-D-glucosaminyl)-L-seryl-[protein] + H2O = N-acetyl-D-glucosamine + L-seryl-[protein]. The catalysed reaction is 3-O-(N-acetyl-beta-D-glucosaminyl)-L-threonyl-[protein] + H2O = L-threonyl-[protein] + N-acetyl-D-glucosamine. With respect to regulation, inhibited by PUGNac (O-(2-acetamido-2-deoxy-D-glucopyranosylidene)amino-N-phenylcarbamate). In terms of biological role, cleaves GlcNAc from O-glycosylated proteins. Can use p-nitrophenyl-beta-GlcNAc and 4-methylumbelliferone-GlcNAc as substrate (in vitro). The chain is Protein O-GlcNAcase from Oceanicola granulosus (strain ATCC BAA-861 / DSM 15982 / KCTC 12143 / HTCC2516).